The following is a 110-amino-acid chain: uncharacterized protein (110 aa).

The chain crosses the membrane as a helical span at residues 88 to 108 (LTRICLLIFGIGLVVLIFLKL).

Its subcellular location is the membrane. This is an uncharacterized protein from Rickettsia prowazekii (strain Madrid E).